A 348-amino-acid polypeptide reads, in one-letter code: EGF-like domain containing protein 1 (348 aa).

The signal sequence occupies residues 1 to 19 (MFYLSTFMTIVISLSLVSC). The EGF-like domain maps to 60–92 (TGSDCKVTCQNNGRCYDGNKCLCSSDYTGHLCE). 3 disulfide bridges follow: cysteine 64–cysteine 74, cysteine 68–cysteine 80, and cysteine 82–cysteine 91. The region spanning 99-342 (RCTLDGVVFE…PTCAAPAVSQ (244 aa)) is the ZP domain.

As to expression, prismatic layer of shell (at protein level). Expressed primarily in the mantle with highest level in the mantle edge and lower level in the mantle pallium.

It localises to the secreted. This is EGF-like domain containing protein 1 from Margaritifera margaritifera (Freshwater pearl mussel).